The following is a 474-amino-acid chain: Alginate biosynthesis protein AlgX (474 aa).

The signal sequence occupies residues Met1–Ala26. Positions Ala27 to Cys347 are SGNH hydrolase-like domain. An intrachain disulfide couples Cys44 to Cys229. The active site involves Asp174. Catalysis depends on His176, which acts as the Proton acceptor. Catalysis depends on Ser269, which acts as the Nucleophile. Cys347 and Cys460 are disulfide-bonded. The CBM domain stretch occupies residues Ser348 to Arg474.

The protein belongs to the AlgX family. In terms of assembly, monomer. Interacts with AlgK and MucD.

The protein resides in the periplasm. The protein operates within glycan biosynthesis; alginate biosynthesis. In terms of biological role, plays two roles in the biosynthesis of the exopolysaccharide alginate: protects alginate from degradation as the polymer traverses the periplasm, and also plays a role in its O-acetylation. Acetylation of alginate causes the cells in the biofilm to adhere better to lung epithelium, form microcolonies, and resist the effects of the host immune system and/or antibiotics. Displays a low acetylesterase activity in vitro using a pseudosubstrate, 3-carboxyumbelliferyl acetate. Probably has acetyltransferase activity in vivo. The chain is Alginate biosynthesis protein AlgX (algX) from Pseudomonas aeruginosa (strain ATCC 15692 / DSM 22644 / CIP 104116 / JCM 14847 / LMG 12228 / 1C / PRS 101 / PAO1).